A 123-amino-acid polypeptide reads, in one-letter code: Large ribosomal subunit protein bL20 (123 aa).

The protein belongs to the bacterial ribosomal protein bL20 family.

Functionally, binds directly to 23S ribosomal RNA and is necessary for the in vitro assembly process of the 50S ribosomal subunit. It is not involved in the protein synthesizing functions of that subunit. The protein is Large ribosomal subunit protein bL20 (rplT) of Chlamydia muridarum (strain MoPn / Nigg).